We begin with the raw amino-acid sequence, 104 residues long: Phosphoribosyl-ATP pyrophosphatase (104 aa).

This sequence belongs to the PRA-PH family.

It is found in the cytoplasm. It catalyses the reaction 1-(5-phospho-beta-D-ribosyl)-ATP + H2O = 1-(5-phospho-beta-D-ribosyl)-5'-AMP + diphosphate + H(+). It functions in the pathway amino-acid biosynthesis; L-histidine biosynthesis; L-histidine from 5-phospho-alpha-D-ribose 1-diphosphate: step 2/9. This chain is Phosphoribosyl-ATP pyrophosphatase, found in Erythrobacter litoralis (strain HTCC2594).